Reading from the N-terminus, the 441-residue chain is DNA double-strand break repair protein Mre11 (441 aa).

Asp9, His11, Asp50, and Asn85 together coordinate Mn(2+). Residue His86 is the Proton donor of the active site. Mn(2+)-binding residues include His150, Asp181, and His183. The tract at residues 360 to 441 (ESLLSDDPDA…SRDSSLGDFA (82 aa)) is disordered. Acidic residues-rich tracts occupy residues 379–403 (AEAE…EDTA) and 411–425 (TDTD…DSET).

This sequence belongs to the MRE11/RAD32 family. Homodimer. Forms a heterotetramer composed of two Mre11 subunits and two Rad50 subunits. Mn(2+) serves as cofactor.

With respect to regulation, nuclease activity is regulated by Rad50. Functionally, part of the Rad50/Mre11 complex, which is involved in the early steps of DNA double-strand break (DSB) repair. Mre11 binds to DSB ends and has both double-stranded 3'-5' exonuclease activity and single-stranded endonuclease activity. In polyploid organisms, the Rad50/Mre11 complex appears to restrain the repair of double-strand breaks by homologous recombination, allowing another pathway to act as the primary mode of repair. In Haloferax volcanii (strain ATCC 29605 / DSM 3757 / JCM 8879 / NBRC 14742 / NCIMB 2012 / VKM B-1768 / DS2) (Halobacterium volcanii), this protein is DNA double-strand break repair protein Mre11.